Here is a 64-residue protein sequence, read N- to C-terminus: MPKMKSHRGACKRFKTTSSGKIKRERMNGSHNLEKKNSKRCRRLHQTALLEGLKAKQIKRMIQA.

The protein belongs to the bacterial ribosomal protein bL35 family.

The chain is Large ribosomal subunit protein bL35 from Pelodictyon phaeoclathratiforme (strain DSM 5477 / BU-1).